The chain runs to 78 residues: Sec-independent protein translocase protein TatA (78 aa).

The helical transmembrane segment at 1 to 21 (MGSLSIWHWIVVIGVVLLLFG) threads the bilayer. Basic and acidic residues predominate over residues 42-60 (GLQDDEKTAEKPEPVKSID). The segment at 42–78 (GLQDDEKTAEKPEPVKSIDHTAPPAAAPRTDVGSKVV) is disordered.

The protein belongs to the TatA/E family. In terms of assembly, the Tat system comprises two distinct complexes: a TatABC complex, containing multiple copies of TatA, TatB and TatC subunits, and a separate TatA complex, containing only TatA subunits. Substrates initially bind to the TatABC complex, which probably triggers association of the separate TatA complex to form the active translocon.

It is found in the cell inner membrane. Part of the twin-arginine translocation (Tat) system that transports large folded proteins containing a characteristic twin-arginine motif in their signal peptide across membranes. TatA could form the protein-conducting channel of the Tat system. This chain is Sec-independent protein translocase protein TatA, found in Rhodopseudomonas palustris (strain BisB18).